The chain runs to 360 residues: DnaJ homolog subfamily C member 25 (360 aa).

The chain crosses the membrane as a helical span at residues 20–40; sequence WMLLAPLLPALLLVRPAGALV. The J domain maps to 49-124; that stretch reads DCYEVLGVSR…ETRKDYDYML (76 aa). A run of 2 helical transmembrane segments spans residues 150–170 and 244–264; these read VVIL…WWNS and LLLF…VWYC.

It belongs to the DNAJC25 family.

The protein resides in the membrane. This chain is DnaJ homolog subfamily C member 25 (DNAJC25), found in Homo sapiens (Human).